The primary structure comprises 910 residues: Staphylococcal nuclease domain-containing protein 1 (910 aa).

Alanine 2 carries the N-acetylalanine modification. 3 consecutive TNase-like domains span residues 18-166, 193-328, and 341-496; these read TVQR…MWSE, KPVN…IWRD, and KQFV…LHSK. Threonine 103 is modified (phosphothreonine). The residue at position 193 (lysine 193) is an N6-acetyllysine. Threonine 235 and threonine 240 each carry phosphothreonine. 2 consecutive short sequence motifs (nuclear localization signal) follow at residues 321-325 and 388-392; these read RRLRI and KKLRP. Serine 426 is subject to Phosphoserine. Lysine 513 participates in a covalent cross-link: Glycyl lysine isopeptide (Lys-Gly) (interchain with G-Cter in SUMO2). Positions 525–660 constitute a TNase-like 4 domain; it reads GRSEAVVEYV…KQRKEKVWAH (136 aa). N6-acetyllysine is present on lysine 641. Serine 645 carries the post-translational modification Phosphoserine. The region spanning 729–787 is the Tudor domain; that stretch reads APRRGEFCIAKFVDGEWYRARVEKVESPAKVHVFYIDYGNREILPSTRLGTLPPAFSTR. Residue threonine 779 is modified to Phosphothreonine. Phosphoserine is present on residues serine 785 and serine 909.

Forms a ternary complex with STAT6 and POLR2A. Associates with the RNA-induced silencing complex (RISC). Interacts with the RISC components AGO2, FMR1 and TNRC6A. Interacts with GTF2E1 and GTF2E2. Interacts with PIM1. Interacts with STAT5. Interacts with SYT11 (via C2 2 domain); the interaction with SYT11 is direct. In terms of processing, phosphorylated by PIM1 in vitro.

The protein resides in the cytoplasm. Its subcellular location is the nucleus. It localises to the melanosome. It catalyses the reaction Endonucleolytic cleavage to nucleoside 3'-phosphates and 3'-phosphooligonucleotide end-products.. Endonuclease that mediates miRNA decay of both protein-free and AGO2-loaded miRNAs. As part of its function in miRNA decay, regulates mRNAs involved in G1-to-S phase transition. Functions as a bridging factor between STAT6 and the basal transcription factor. Plays a role in PIM1 regulation of MYB activity. Functions as a transcriptional coactivator for STAT5. The protein is Staphylococcal nuclease domain-containing protein 1 (Snd1) of Mus musculus (Mouse).